The chain runs to 408 residues: Probable medium-chain specific acyl-CoA dehydrogenase 2, mitochondrial (408 aa).

Residues 1-5 (MLSRL) constitute a mitochondrion transit peptide. FAD contacts are provided by residues 143 to 152 (YCVTEPGAGS) and 176 to 178 (WIT). S152 lines the substrate pocket. 263–266 (DMTR) contacts substrate. FAD is bound by residues 291 to 293 (RKA), 301 to 302 (HQ), and 355 to 359 (MLFRC). E382 serves as the catalytic Proton acceptor. Position 383 (G383) interacts with substrate. An FAD-binding site is contributed by 384–386 (TSQ). R394 serves as a coordination point for substrate.

The protein belongs to the acyl-CoA dehydrogenase family. Homotetramer. Requires FAD as cofactor.

It localises to the mitochondrion matrix. The enzyme catalyses a medium-chain 2,3-saturated fatty acyl-CoA + oxidized [electron-transfer flavoprotein] + H(+) = a medium-chain (2E)-enoyl-CoA + reduced [electron-transfer flavoprotein]. The protein operates within lipid metabolism; mitochondrial fatty acid beta-oxidation. Its function is as follows. This enzyme is specific for acyl chain lengths of 4 to 16. This chain is Probable medium-chain specific acyl-CoA dehydrogenase 2, mitochondrial, found in Caenorhabditis briggsae.